The following is a 663-amino-acid chain: UvrABC system protein B (663 aa).

Positions 30-417 (DGIKAGKRHQ…TDKMVEQIIR (388 aa)) constitute a Helicase ATP-binding domain. 43–50 (GATGTGKT) contacts ATP. A Beta-hairpin motif is present at residues 96–119 (YYDYYQPEAYVPSTDTFIEKDASI). The 167-residue stretch at 434–600 (QIDDLLSEIQ…TINKKIHDLI (167 aa)) folds into the Helicase C-terminal domain. The 36-residue stretch at 627–662 (QKTIDNIEKEMKQAAKDLDFEKATELRDMLFELKAE) folds into the UVR domain.

Belongs to the UvrB family. In terms of assembly, forms a heterotetramer with UvrA during the search for lesions. Interacts with UvrC in an incision complex.

The protein resides in the cytoplasm. In terms of biological role, the UvrABC repair system catalyzes the recognition and processing of DNA lesions. A damage recognition complex composed of 2 UvrA and 2 UvrB subunits scans DNA for abnormalities. Upon binding of the UvrA(2)B(2) complex to a putative damaged site, the DNA wraps around one UvrB monomer. DNA wrap is dependent on ATP binding by UvrB and probably causes local melting of the DNA helix, facilitating insertion of UvrB beta-hairpin between the DNA strands. Then UvrB probes one DNA strand for the presence of a lesion. If a lesion is found the UvrA subunits dissociate and the UvrB-DNA preincision complex is formed. This complex is subsequently bound by UvrC and the second UvrB is released. If no lesion is found, the DNA wraps around the other UvrB subunit that will check the other stand for damage. This chain is UvrABC system protein B, found in Staphylococcus aureus (strain Mu50 / ATCC 700699).